Reading from the N-terminus, the 398-residue chain is 4-hydroxy-3-methylbut-2-enyl diphosphate reductase (398 aa).

Cys66 serves as a coordination point for [4Fe-4S] cluster. His96 serves as a coordination point for (2E)-4-hydroxy-3-methylbut-2-enyl diphosphate. His96 contacts dimethylallyl diphosphate. His96 serves as a coordination point for isopentenyl diphosphate. [4Fe-4S] cluster is bound at residue Cys157. Position 185 (His185) interacts with (2E)-4-hydroxy-3-methylbut-2-enyl diphosphate. His185 is a dimethylallyl diphosphate binding site. His185 provides a ligand contact to isopentenyl diphosphate. The active-site Proton donor is Glu187. Thr250 lines the (2E)-4-hydroxy-3-methylbut-2-enyl diphosphate pocket. Cys288 contacts [4Fe-4S] cluster. Residues Ser317, Ser318, Asn319, and Ser380 each coordinate (2E)-4-hydroxy-3-methylbut-2-enyl diphosphate. 4 residues coordinate dimethylallyl diphosphate: Ser317, Ser318, Asn319, and Ser380. Positions 317, 318, 319, and 380 each coordinate isopentenyl diphosphate.

The protein belongs to the IspH family. [4Fe-4S] cluster is required as a cofactor.

It catalyses the reaction isopentenyl diphosphate + 2 oxidized [2Fe-2S]-[ferredoxin] + H2O = (2E)-4-hydroxy-3-methylbut-2-enyl diphosphate + 2 reduced [2Fe-2S]-[ferredoxin] + 2 H(+). It carries out the reaction dimethylallyl diphosphate + 2 oxidized [2Fe-2S]-[ferredoxin] + H2O = (2E)-4-hydroxy-3-methylbut-2-enyl diphosphate + 2 reduced [2Fe-2S]-[ferredoxin] + 2 H(+). It participates in isoprenoid biosynthesis; dimethylallyl diphosphate biosynthesis; dimethylallyl diphosphate from (2E)-4-hydroxy-3-methylbutenyl diphosphate: step 1/1. The protein operates within isoprenoid biosynthesis; isopentenyl diphosphate biosynthesis via DXP pathway; isopentenyl diphosphate from 1-deoxy-D-xylulose 5-phosphate: step 6/6. Catalyzes the conversion of 1-hydroxy-2-methyl-2-(E)-butenyl 4-diphosphate (HMBPP) into a mixture of isopentenyl diphosphate (IPP) and dimethylallyl diphosphate (DMAPP). Acts in the terminal step of the DOXP/MEP pathway for isoprenoid precursor biosynthesis. In Prochlorococcus marinus (strain MIT 9301), this protein is 4-hydroxy-3-methylbut-2-enyl diphosphate reductase.